The chain runs to 123 residues: Small ribosomal subunit protein uS12 (123 aa).

The interval 1–28 (MPTIQQLIRKPREPKRVRSKSQHLESCP) is disordered. 3-methylthioaspartic acid is present on Asp-89.

It belongs to the universal ribosomal protein uS12 family. As to quaternary structure, part of the 30S ribosomal subunit. Contacts proteins S8 and S17. May interact with IF1 in the 30S initiation complex.

In terms of biological role, with S4 and S5 plays an important role in translational accuracy. Interacts with and stabilizes bases of the 16S rRNA that are involved in tRNA selection in the A site and with the mRNA backbone. Located at the interface of the 30S and 50S subunits, it traverses the body of the 30S subunit contacting proteins on the other side and probably holding the rRNA structure together. The combined cluster of proteins S8, S12 and S17 appears to hold together the shoulder and platform of the 30S subunit. The protein is Small ribosomal subunit protein uS12 of Cereibacter sphaeroides (strain ATCC 17029 / ATH 2.4.9) (Rhodobacter sphaeroides).